We begin with the raw amino-acid sequence, 141 residues long: MDKKYDITAVLNEDSSMTAISDQFQITLDARPKHTAKGFGPLAALLSGLAACELATANLMAPAKMITINKLLMNVTGSRSTNPTDGYFGLREINLHWEIHSPNSETEIKEFIDFVSKRCPAHNTLQGVSQLKINVNVTLVH.

The protein belongs to the OsmC/Ohr family. In terms of assembly, homodimer.

Its subcellular location is the cytoplasm. In terms of biological role, reduces organic and inorganic peroxide substrates. Protects the cell against oxidative stress. The protein is Hydroperoxide reductase of Mycoplasma pneumoniae (strain ATCC 29342 / M129 / Subtype 1) (Mycoplasmoides pneumoniae).